We begin with the raw amino-acid sequence, 712 residues long: Phosphoribosylformylglycinamidine synthase subunit PurL (712 aa).

The active site involves His32. Residue Tyr35 participates in ATP binding. Glu76 is a Mg(2+) binding site. Substrate is bound by residues 77-80 and Arg99; that span reads SHNH. His78 (proton acceptor) is an active-site residue. Asp100 contacts Mg(2+). Gln223 contributes to the substrate binding site. Asp251 contacts Mg(2+). 295-297 contacts substrate; the sequence is ESQ. ATP is bound by residues Asp470 and Gly507. Residue Asn508 participates in Mg(2+) binding. Ser510 is a substrate binding site.

Belongs to the FGAMS family. As to quaternary structure, monomer. Part of the FGAM synthase complex composed of 1 PurL, 1 PurQ and 2 PurS subunits.

Its subcellular location is the cytoplasm. The enzyme catalyses N(2)-formyl-N(1)-(5-phospho-beta-D-ribosyl)glycinamide + L-glutamine + ATP + H2O = 2-formamido-N(1)-(5-O-phospho-beta-D-ribosyl)acetamidine + L-glutamate + ADP + phosphate + H(+). It participates in purine metabolism; IMP biosynthesis via de novo pathway; 5-amino-1-(5-phospho-D-ribosyl)imidazole from N(2)-formyl-N(1)-(5-phospho-D-ribosyl)glycinamide: step 1/2. In terms of biological role, part of the phosphoribosylformylglycinamidine synthase complex involved in the purines biosynthetic pathway. Catalyzes the ATP-dependent conversion of formylglycinamide ribonucleotide (FGAR) and glutamine to yield formylglycinamidine ribonucleotide (FGAM) and glutamate. The FGAM synthase complex is composed of three subunits. PurQ produces an ammonia molecule by converting glutamine to glutamate. PurL transfers the ammonia molecule to FGAR to form FGAM in an ATP-dependent manner. PurS interacts with PurQ and PurL and is thought to assist in the transfer of the ammonia molecule from PurQ to PurL. This Thermococcus gammatolerans (strain DSM 15229 / JCM 11827 / EJ3) protein is Phosphoribosylformylglycinamidine synthase subunit PurL.